The primary structure comprises 300 residues: LysM and putative peptidoglycan-binding domain-containing protein 3 (300 aa).

Residues 1-216 are Extracellular-facing; it reads MAGRNQNRTA…PYYGADWGMG (216 aa). N-linked (GlcNAc...) asparagine glycosylation is found at N7 and N26. The residue at position 55 (S55) is a Phosphoserine. A LysM domain is found at 65-109; that stretch reads LTKDIQEGDTLNAVALQYCCTVADIKRVNNLISDQDFFALRSIKI. Positions 136–157 are disordered; that stretch reads PYFQEQDTVPANDSPSSSESAG. The segment covering 140-156 has biased composition (polar residues); it reads EQDTVPANDSPSSSESA. Residue N199 is glycosylated (N-linked (GlcNAc...) asparagine). The helical transmembrane segment at 217–237 threads the bilayer; the sequence is WWTAVVIMLIVGIITPVFYLL. The Cytoplasmic segment spans residues 238-300; it reads YYEILAKVDV…LYRQDPQARD (63 aa). The disordered stretch occupies residues 253 to 300; it reads VDSSHLHPGLTPPSHHREMGNAIGPTKGIPVGQQDDHRLYRQDPQARD. Residues 286-300 show a composition bias toward basic and acidic residues; the sequence is QDDHRLYRQDPQARD.

It is found in the cell membrane. It localises to the golgi apparatus. Its function is as follows. Essential for Golgi structural integrity. The sequence is that of LysM and putative peptidoglycan-binding domain-containing protein 3 (Lysmd3) from Rattus norvegicus (Rat).